Here is a 98-residue protein sequence, read N- to C-terminus: Flagellar hook-basal body complex protein FliE (98 aa).

This sequence belongs to the FliE family.

It localises to the bacterial flagellum basal body. The chain is Flagellar hook-basal body complex protein FliE from Listeria monocytogenes serovar 1/2a (strain ATCC BAA-679 / EGD-e).